Consider the following 735-residue polypeptide: Catalase-peroxidase (735 aa).

The span at 1-26 (MENQNRQNASQCPFHGSITNQSSNRT) shows a compositional bias: polar residues. The segment at 1–29 (MENQNRQNASQCPFHGSITNQSSNRTTNK) is disordered. A cross-link (tryptophyl-tyrosyl-methioninium (Trp-Tyr) (with M-249)) is located at residues 100-223 (WHSAGTYRIG…LAASVMGLIY (124 aa)). Residue His101 is the Proton acceptor of the active site. Residues 223–249 (YVNPEGPDGKPDPKAAARDIRETFRRM) constitute a cross-link (tryptophyl-tyrosyl-methioninium (Tyr-Met) (with W-100)). His264 contacts heme b.

This sequence belongs to the peroxidase family. Peroxidase/catalase subfamily. As to quaternary structure, homodimer or homotetramer. The cofactor is heme b. In terms of processing, formation of the three residue Trp-Tyr-Met cross-link is important for the catalase, but not the peroxidase activity of the enzyme.

It carries out the reaction H2O2 + AH2 = A + 2 H2O. The enzyme catalyses 2 H2O2 = O2 + 2 H2O. Bifunctional enzyme with both catalase and broad-spectrum peroxidase activity. The sequence is that of Catalase-peroxidase from Geobacillus thermodenitrificans (strain NG80-2).